A 143-amino-acid polypeptide reads, in one-letter code: Putative phosphotransferase IIA component SgcA (143 aa).

The region spanning 1–143 (MINDIKWVQA…DDALFALVSG (143 aa)) is the PTS EIIA type-2 domain. The active-site Tele-phosphohistidine intermediate is H63.

It is found in the cytoplasm. Functionally, the phosphoenolpyruvate-dependent sugar phosphotransferase system (sugar PTS), a major carbohydrate active -transport system, catalyzes the phosphorylation of incoming sugar substrates concomitantly with their translocation across the cell membrane. This Escherichia coli (strain K12) protein is Putative phosphotransferase IIA component SgcA (sgcA).